A 207-amino-acid chain; its full sequence is Outer-membrane lipoprotein LolB (207 aa).

A signal peptide spans 1 to 21 (MPQPDFRLIRLLPLAALVLTA). Cysteine 22 carries N-palmitoyl cysteine lipidation. Cysteine 22 carries S-diacylglycerol cysteine lipidation.

It belongs to the LolB family. Monomer.

The protein resides in the cell outer membrane. Plays a critical role in the incorporation of lipoproteins in the outer membrane after they are released by the LolA protein. In Shigella sonnei (strain Ss046), this protein is Outer-membrane lipoprotein LolB.